The chain runs to 269 residues: Tryptophan synthase alpha chain (269 aa).

Residues Glu54 and Asp65 each act as proton acceptor in the active site.

The protein belongs to the TrpA family. In terms of assembly, tetramer of two alpha and two beta chains.

It catalyses the reaction (1S,2R)-1-C-(indol-3-yl)glycerol 3-phosphate + L-serine = D-glyceraldehyde 3-phosphate + L-tryptophan + H2O. The protein operates within amino-acid biosynthesis; L-tryptophan biosynthesis; L-tryptophan from chorismate: step 5/5. Its function is as follows. The alpha subunit is responsible for the aldol cleavage of indoleglycerol phosphate to indole and glyceraldehyde 3-phosphate. The sequence is that of Tryptophan synthase alpha chain from Synechococcus sp. (strain CC9902).